We begin with the raw amino-acid sequence, 216 residues long: Octanoyltransferase (216 aa).

One can recognise a BPL/LPL catalytic domain in the interval 33–212 (AHTPDELWLV…ILSNILGLTA (180 aa)). Substrate is bound by residues 72-79 (RGGQVTYH), 139-141 (SLG), and 152-154 (GVA). The Acyl-thioester intermediate role is filled by C170.

Belongs to the LipB family.

The protein localises to the cytoplasm. The enzyme catalyses octanoyl-[ACP] + L-lysyl-[protein] = N(6)-octanoyl-L-lysyl-[protein] + holo-[ACP] + H(+). The protein operates within protein modification; protein lipoylation via endogenous pathway; protein N(6)-(lipoyl)lysine from octanoyl-[acyl-carrier-protein]: step 1/2. Its function is as follows. Catalyzes the transfer of endogenously produced octanoic acid from octanoyl-acyl-carrier-protein onto the lipoyl domains of lipoate-dependent enzymes. Lipoyl-ACP can also act as a substrate although octanoyl-ACP is likely to be the physiological substrate. In Saccharophagus degradans (strain 2-40 / ATCC 43961 / DSM 17024), this protein is Octanoyltransferase.